The sequence spans 163 residues: Cyanate hydratase (163 aa).

Active-site residues include Arg103, Glu106, and Ser129.

Belongs to the cyanase family.

It carries out the reaction cyanate + hydrogencarbonate + 3 H(+) = NH4(+) + 2 CO2. Functionally, catalyzes the reaction of cyanate with bicarbonate to produce ammonia and carbon dioxide. This Ajellomyces capsulatus (strain G186AR / H82 / ATCC MYA-2454 / RMSCC 2432) (Darling's disease fungus) protein is Cyanate hydratase.